Reading from the N-terminus, the 226-residue chain is Probable septum site-determining protein MinC (226 aa).

This sequence belongs to the MinC family. As to quaternary structure, interacts with MinD and FtsZ.

Cell division inhibitor that blocks the formation of polar Z ring septums. Rapidly oscillates between the poles of the cell to destabilize FtsZ filaments that have formed before they mature into polar Z rings. Prevents FtsZ polymerization. The protein is Probable septum site-determining protein MinC of Bacillus velezensis (strain DSM 23117 / BGSC 10A6 / LMG 26770 / FZB42) (Bacillus amyloliquefaciens subsp. plantarum).